We begin with the raw amino-acid sequence, 52 residues long: KAVAVLRGDSNVSGVVRFEQTHESEPTKIFIGQNSILALTVVVHAGTDDYGK.

His-44 provides a ligand contact to Cu cation.

Belongs to the Cu-Zn superoxide dismutase family. As to quaternary structure, homodimer. Requires Cu cation as cofactor. Zn(2+) serves as cofactor.

The protein localises to the cytoplasm. It carries out the reaction 2 superoxide + 2 H(+) = H2O2 + O2. Its function is as follows. Destroys radicals which are normally produced within the cells and which are toxic to biological systems. The polypeptide is Superoxide dismutase [Cu-Zn] 2 (Debaryomyces hansenii (Yeast)).